The chain runs to 517 residues: Recombining binding protein suppressor of hairless-like protein (517 aa).

Residues 26–37 show a composition bias toward basic and acidic residues; sequence EMQLQSEADRRS. Residues 26–48 are disordered; the sequence is EMQLQSEADRRSLPGTWTRSSPE. DNA-binding regions lie at residues 78-88, 193-198, and 220-225; these read QKSYGNEKRFF, SKPSQK, and RLRSQT. Residues 387–512 enclose the IPT/TIG domain; it reads LISTLELSGG…HQEFTRTNFH (126 aa).

Belongs to the Su(H) family. Interacts weakly with EBNA2. Does not interact with any Notch proteins.

It is found in the nucleus. In terms of biological role, putative transcription factor, which cooperates with EBNA2 to activate transcription. In Homo sapiens (Human), this protein is Recombining binding protein suppressor of hairless-like protein (RBPJL).